The primary structure comprises 429 residues: Adenylosuccinate synthetase (429 aa).

GTP is bound by residues Gly-12–Lys-18 and Gly-40–Thr-42. The Proton acceptor role is filled by Asp-13. The Mg(2+) site is built by Asp-13 and Gly-40. IMP is bound by residues Asp-13–Lys-16, Asn-38–His-41, Thr-128, Arg-142, Gln-223, Thr-238, and Arg-302. His-41 functions as the Proton donor in the catalytic mechanism. Thr-298–Arg-304 lines the substrate pocket. GTP contacts are provided by residues Arg-304, Ser-330–Asp-332, and Ser-412–Gly-414.

It belongs to the adenylosuccinate synthetase family. Homodimer. The cofactor is Mg(2+).

The protein localises to the cytoplasm. It carries out the reaction IMP + L-aspartate + GTP = N(6)-(1,2-dicarboxyethyl)-AMP + GDP + phosphate + 2 H(+). Its pathway is purine metabolism; AMP biosynthesis via de novo pathway; AMP from IMP: step 1/2. Its function is as follows. Plays an important role in the de novo pathway of purine nucleotide biosynthesis. Catalyzes the first committed step in the biosynthesis of AMP from IMP. The protein is Adenylosuccinate synthetase of Bacillus cereus (strain ATCC 10987 / NRS 248).